Reading from the N-terminus, the 160-residue chain is Cytochrome b6-f complex subunit 4 (160 aa).

Transmembrane regions (helical) follow at residues 36-56 (LLYIPPVVIPGTIACTVGLAV), 95-115 (LLGVLLMAAVPAGLLVVPFPE), and 131-151 (TVFSAGTAVAPWLGIGAALPI).

It belongs to the cytochrome b family. PetD subfamily. As to quaternary structure, the 4 large subunits of the cytochrome b6-f complex are cytochrome b6, subunit IV (17 kDa polypeptide, petD), cytochrome f and the Rieske protein, while the 4 small subunits are petG, petL, petM and petN. The complex functions as a dimer.

The protein localises to the plastid. Its subcellular location is the chloroplast thylakoid membrane. Component of the cytochrome b6-f complex, which mediates electron transfer between photosystem II (PSII) and photosystem I (PSI), cyclic electron flow around PSI, and state transitions. This chain is Cytochrome b6-f complex subunit 4, found in Huperzia lucidula (Shining clubmoss).